Consider the following 233-residue polypeptide: Translation initiation factor 6 (233 aa).

The protein belongs to the eIF-6 family.

Binds to the 50S ribosomal subunit and prevents its association with the 30S ribosomal subunit to form the 70S initiation complex. This chain is Translation initiation factor 6, found in Aeropyrum pernix (strain ATCC 700893 / DSM 11879 / JCM 9820 / NBRC 100138 / K1).